The following is a 270-amino-acid chain: Putative ABC transporter ATP-binding protein MG304 homolog (270 aa).

The ABC transporter domain maps to 2 to 232 (LNVTNLSFTY…LHLFHQHHFT (231 aa)). 36–43 (GHNGSGKS) provides a ligand contact to ATP.

The protein belongs to the ABC transporter superfamily.

This Mycoplasma pneumoniae (strain ATCC 29342 / M129 / Subtype 1) (Mycoplasmoides pneumoniae) protein is Putative ABC transporter ATP-binding protein MG304 homolog.